The primary structure comprises 199 residues: MFRLLMSFNNFKDLISLMSLSFAFQNSFSLFNCSIRSRSLLICVFKFCSLFMFSKFFCFLRMRNRCDASVFFLLRSCLILSSSLEVLTGASSSFTTTAVVAATFPFLGSRSFLNCETSWPLFIMLMSSSALPLLTSSNDSKREPSSESLDIRFCRCSERLFTFIPFLLAMSMFVDFFSHPCFALILTNKTICLRNYHWL.

A run of 4 helical transmembrane segments spans residues 40-60, 86-106, 117-137, and 166-186; these read LLICVFKFCSLFMFSKFFCFL, VLTGASSSFTTTAVVAATFPF, TSWPLFIMLMSSSALPLLTSS, and FLLAMSMFVDFFSHPCFALIL.

It localises to the membrane. This is an uncharacterized protein from Saccharomyces cerevisiae (strain ATCC 204508 / S288c) (Baker's yeast).